A 478-amino-acid polypeptide reads, in one-letter code: tRNA modification GTPase MnmE (478 aa).

Positions 25, 82, and 135 each coordinate (6S)-5-formyl-5,6,7,8-tetrahydrofolate. The 170-residue stretch at 231-400 (GIKVVIAGQP…LREQLLRVVG (170 aa)) folds into the TrmE-type G domain. A K(+)-binding site is contributed by Asn-241. Residues 241–246 (NVGKSS), 260–266 (TPVAGTT), and 285–288 (DTAG) contribute to the GTP site. Ser-245 contributes to the Mg(2+) binding site. Positions 260, 262, and 265 each coordinate K(+). Thr-266 is a Mg(2+) binding site. Position 478 (Lys-478) interacts with (6S)-5-formyl-5,6,7,8-tetrahydrofolate.

It belongs to the TRAFAC class TrmE-Era-EngA-EngB-Septin-like GTPase superfamily. TrmE GTPase family. In terms of assembly, homodimer. Heterotetramer of two MnmE and two MnmG subunits. K(+) is required as a cofactor.

The protein localises to the cytoplasm. Its function is as follows. Exhibits a very high intrinsic GTPase hydrolysis rate. Involved in the addition of a carboxymethylaminomethyl (cmnm) group at the wobble position (U34) of certain tRNAs, forming tRNA-cmnm(5)s(2)U34. The chain is tRNA modification GTPase MnmE from Polaromonas naphthalenivorans (strain CJ2).